A 355-amino-acid polypeptide reads, in one-letter code: Type II methyltransferase M.MthZI (355 aa).

Belongs to the N(4)/N(6)-methyltransferase family. N(4) subfamily.

The catalysed reaction is a 2'-deoxycytidine in DNA + S-adenosyl-L-methionine = an N(4)-methyl-2'-deoxycytidine in DNA + S-adenosyl-L-homocysteine + H(+). In terms of biological role, a beta subtype methylase that recognizes the double-stranded sequence 5'-CTAG-3', methylates C-1 on both strands, and protects the DNA from cleavage by the MthZI endonuclease. The polypeptide is Type II methyltransferase M.MthZI (Methanothermobacter thermautotrophicus (Methanobacterium thermoformicicum)).